Here is a 1058-residue protein sequence, read N- to C-terminus: Ubiquitin-like modifier-activating enzyme 1 (1058 aa).

The interval 1–47 is disordered; sequence MSSSPLSKKRRVSGPDPKPGSNCSPAQSVLPQVPSAPTNGMAKNGSE. Serine 2 carries the post-translational modification N-acetylserine. A phosphoserine mark is found at serine 4, serine 13, serine 21, serine 24, and serine 46. Residues 21-38 are compositionally biased toward polar residues; it reads SNCSPAQSVLPQVPSAPT. Tyrosine 55 carries the phosphotyrosine modification. A run of 2 repeats spans residues 63–199 and 459–611. A 2 approximate repeats region spans residues 63 to 611; the sequence is GHEAMKRLQT…GTKGNVQVVI (549 aa). ATP contacts are provided by residues alanine 478, aspartate 504, arginine 515, lysine 528, and 576–577; that span reads DN. Lysine 528 bears the N6-succinyllysine mark. The active-site Glycyl thioester intermediate is the cysteine 632. Lysine 671 carries the N6-acetyllysine modification. A Phosphothreonine modification is found at threonine 800. Residues serine 810, serine 816, serine 820, and serine 835 each carry the phosphoserine modification. An N6-acetyllysine modification is found at lysine 980.

Belongs to the ubiquitin-activating E1 family. As to quaternary structure, monomer. As to expression, ubiquitous.

Its subcellular location is the cytoplasm. The protein localises to the mitochondrion. The protein resides in the nucleus. It carries out the reaction ATP + ubiquitin + [E1 ubiquitin-activating enzyme]-L-cysteine = AMP + diphosphate + S-ubiquitinyl-[E1 ubiquitin-activating enzyme]-L-cysteine.. Its pathway is protein modification; protein ubiquitination. In terms of biological role, catalyzes the first step in ubiquitin conjugation to mark cellular proteins for degradation through the ubiquitin-proteasome system. Activates ubiquitin by first adenylating its C-terminal glycine residue with ATP, and thereafter linking this residue to the side chain of a cysteine residue in E1, yielding a ubiquitin-E1 thioester and free AMP. Essential for the formation of radiation-induced foci, timely DNA repair and for response to replication stress. Promotes the recruitment of TP53BP1 and BRCA1 at DNA damage sites. In Oryctolagus cuniculus (Rabbit), this protein is Ubiquitin-like modifier-activating enzyme 1 (UBA1).